The primary structure comprises 267 residues: tRNA pseudouridine synthase A (267 aa).

D51 (nucleophile) is an active-site residue. Position 109 (Y109) interacts with substrate.

It belongs to the tRNA pseudouridine synthase TruA family. Homodimer.

It carries out the reaction uridine(38/39/40) in tRNA = pseudouridine(38/39/40) in tRNA. In terms of biological role, formation of pseudouridine at positions 38, 39 and 40 in the anticodon stem and loop of transfer RNAs. The chain is tRNA pseudouridine synthase A from Staphylococcus carnosus (strain TM300).